Reading from the N-terminus, the 251-residue chain is uncharacterized protein (251 aa).

The first 18 residues, 1-18, serve as a signal peptide directing secretion; the sequence is MRILIILSIILCSLSIRA.

This sequence belongs to the MlaA family.

This is an uncharacterized protein from Rickettsia conorii (strain ATCC VR-613 / Malish 7).